A 507-amino-acid chain; its full sequence is MNNFFNPSRPSPRPWPNRKKQTDKSAIFLCSVSILVVFFIVVFFITYSEMPKSLFSISAFSGSVQFPQCRSEILTRTLLGQKFLWYAPHSGFSNQLSEFKNALLMAGILNRTLIIPPILDHHAVALGSCPKFRVLSPSEIRISVWNHSIELLKTDRYVSMADIVDISSLVSSSAVRVIDFRYFASLQCGVDLETLCTDDLAEQSQAYESLKQCGYLLSGVRGNVDKCLYAVDEDCRTTVWTYKNGEADGRLDSFQPDEKLKKKKKLSNVRRRRDVYKTLGHGTEAESAAILAFGSLFTAPYKGSELYIDIHKSPKIKSLVEKVDFLPFVREIMIAGKKFASETIKAPFLCAQLRLLDGQFKNHRESTFTGLYQKLEALSVKNPGLINVFVMTDLPEFNWTGTYLGDLSKNSTNFKLHFIGEQDEFLARTEHELDSASHGQKFGSIPMSLDSIKKMQTHCYPHGGSNVQLYIEEAVCSCASLGFVGTPGSTIADSVEMMRKYNACSSS.

A helical; Signal-anchor for type II membrane protein transmembrane segment spans residues 26–46 (AIFLCSVSILVVFFIVVFFIT). N-linked (GlcNAc...) asparagine glycans are attached at residues asparagine 110, asparagine 146, asparagine 398, and asparagine 410.

The protein belongs to the glycosyltransferase GT106 family.

It is found in the membrane. The protein operates within glycan metabolism. In Arabidopsis thaliana (Mouse-ear cress), this protein is O-fucosyltransferase 30.